The sequence spans 148 residues: Probable TtuB-protein conjugate cleaving protease (148 aa).

Residues His22–Leu148 enclose the MPN domain. The active-site Proton donor/acceptor is Glu47. The Zn(2+) site is built by His101, His103, and Asp114. The JAMM motif motif lies at His101–Asp114.

It belongs to the peptidase M67B family. It depends on Zn(2+) as a cofactor.

Functionally, probable metalloprotease that cleaves the ubiquitin-like modifier protein TtuB from protein conjugates, hydrolyzing the isopeptide bond between a lysine residue of the target protein and the C-terminal glycine of the modifier protein. Does not seem to work for all the TtuB conjugates. This Thermus thermophilus (strain ATCC BAA-163 / DSM 7039 / HB27) protein is Probable TtuB-protein conjugate cleaving protease.